The sequence spans 119 residues: Enhancer of yellow 2 transcription factor (119 aa).

The disordered stretch occupies residues Leu93 to Asn119. Positions Asn96–Asn119 are enriched in acidic residues.

This sequence belongs to the ENY2 family. As to quaternary structure, component of the nuclear pore complex (NPC)-associated AMEX complex (anchoring and mRNA export complex), composed of at least e(y)2 and xmas-2. Component of the SAGA transcription coactivator-HAT complexes, at least composed of Ada2b, e(y)2, Pcaf/Gcn5, Taf10 and Nipped-A/Trrap. Within the SAGA complex, e(y)2, Sgf11, and not/nonstop form an additional subcomplex of SAGA called the DUB module (deubiquitination module). Component of the THO complex, composed of at least e(y)2, HPR1, THO2, THOC5, THOC6 and THOC7. Interacts with e(y)1. Interacts with su(Hw) (via zinc fingers). Interacts with xmas-2; required for localization to the nuclear periphery. Interacts with the nuclear pore complex (NPC).

It localises to the nucleus. It is found in the nucleoplasm. The protein localises to the cytoplasm. In terms of biological role, involved in mRNA export coupled transcription activation by association with both the AMEX and the SAGA complexes. The SAGA complex is a multiprotein complex that activates transcription by remodeling chromatin and mediating histone acetylation and deubiquitination. Within the SAGA complex, participates in a subcomplex that specifically deubiquitinates histone H2B. The SAGA complex is recruited to specific gene promoters by activators, where it is required for transcription. Required for nuclear receptor-mediated transactivation. Involved in transcription elongation by recruiting the THO complex onto nascent mRNA. The AMEX complex functions in docking export-competent ribonucleoprotein particles (mRNPs) to the nuclear entrance of the nuclear pore complex (nuclear basket). AMEX participates in mRNA export and accurate chromatin positioning in the nucleus by tethering genes to the nuclear periphery. The chain is Enhancer of yellow 2 transcription factor from Drosophila willistoni (Fruit fly).